A 165-amino-acid polypeptide reads, in one-letter code: ATP synthase subunit b (165 aa).

The chain crosses the membrane as a helical span at residues 10-30; that stretch reads LIFWMLLSFGIVFAVLAKYGF.

It belongs to the ATPase B chain family. F-type ATPases have 2 components, F(1) - the catalytic core - and F(0) - the membrane proton channel. F(1) has five subunits: alpha(3), beta(3), gamma(1), delta(1), epsilon(1). F(0) has three main subunits: a(1), b(2) and c(10-14). The alpha and beta chains form an alternating ring which encloses part of the gamma chain. F(1) is attached to F(0) by a central stalk formed by the gamma and epsilon chains, while a peripheral stalk is formed by the delta and b chains.

The protein localises to the cell inner membrane. F(1)F(0) ATP synthase produces ATP from ADP in the presence of a proton or sodium gradient. F-type ATPases consist of two structural domains, F(1) containing the extramembraneous catalytic core and F(0) containing the membrane proton channel, linked together by a central stalk and a peripheral stalk. During catalysis, ATP synthesis in the catalytic domain of F(1) is coupled via a rotary mechanism of the central stalk subunits to proton translocation. Functionally, component of the F(0) channel, it forms part of the peripheral stalk, linking F(1) to F(0). The polypeptide is ATP synthase subunit b (Bacteroides fragilis (strain ATCC 25285 / DSM 2151 / CCUG 4856 / JCM 11019 / LMG 10263 / NCTC 9343 / Onslow / VPI 2553 / EN-2)).